Consider the following 208-residue polypeptide: Thymidylate kinase (208 aa).

10–17 (GPEGSGKT) provides a ligand contact to ATP.

Belongs to the thymidylate kinase family.

It catalyses the reaction dTMP + ATP = dTDP + ADP. Functionally, phosphorylation of dTMP to form dTDP in both de novo and salvage pathways of dTTP synthesis. The protein is Thymidylate kinase of Bacillus cereus (strain AH187).